The sequence spans 284 residues: 2-dehydro-3-deoxyphosphooctonate aldolase (284 aa).

The protein belongs to the KdsA family.

The protein localises to the cytoplasm. It catalyses the reaction D-arabinose 5-phosphate + phosphoenolpyruvate + H2O = 3-deoxy-alpha-D-manno-2-octulosonate-8-phosphate + phosphate. It participates in carbohydrate biosynthesis; 3-deoxy-D-manno-octulosonate biosynthesis; 3-deoxy-D-manno-octulosonate from D-ribulose 5-phosphate: step 2/3. It functions in the pathway bacterial outer membrane biogenesis; lipopolysaccharide biosynthesis. The protein is 2-dehydro-3-deoxyphosphooctonate aldolase of Sodalis glossinidius (strain morsitans).